The primary structure comprises 154 residues: Myoglobin (154 aa).

Positions 2–148 constitute a Globin domain; it reads GLSDGEWTLV…FRNDMAAQYK (147 aa). S4 is subject to Phosphoserine. H65 is a binding site for nitrite. H65 contacts O2. Phosphothreonine is present on T68. H94 is a heme b binding site.

The protein belongs to the globin family. In terms of assembly, monomeric.

The protein localises to the cytoplasm. Its subcellular location is the sarcoplasm. It catalyses the reaction Fe(III)-heme b-[protein] + nitric oxide + H2O = Fe(II)-heme b-[protein] + nitrite + 2 H(+). It carries out the reaction H2O2 + AH2 = A + 2 H2O. Its function is as follows. Monomeric heme protein which primary function is to store oxygen and facilitate its diffusion within muscle tissues. Reversibly binds oxygen through a pentacoordinated heme iron and enables its timely and efficient release as needed during periods of heightened demand. Depending on the oxidative conditions of tissues and cells, and in addition to its ability to bind oxygen, it also has a nitrite reductase activity whereby it regulates the production of bioactive nitric oxide. Under stress conditions, like hypoxia and anoxia, it also protects cells against reactive oxygen species thanks to its pseudoperoxidase activity. This chain is Myoglobin, found in Capra hircus (Goat).